The primary structure comprises 62 residues: Large ribosomal subunit protein eL37 (62 aa).

Zn(2+) contacts are provided by C20, C23, C35, and C38. The C4-type zinc-finger motif lies at 20–38; that stretch reads CRRCGRHAFNVAKGYCAAC.

This sequence belongs to the eukaryotic ribosomal protein eL37 family. Requires Zn(2+) as cofactor.

Functionally, binds to the 23S rRNA. The protein is Large ribosomal subunit protein eL37 of Staphylothermus marinus (strain ATCC 43588 / DSM 3639 / JCM 9404 / F1).